The sequence spans 438 residues: Prenyltransferase malE (438 aa).

Glu-92 lines the substrate pocket. 7 residues coordinate dimethylallyl diphosphate: Arg-106, Lys-192, Tyr-194, Lys-259, Tyr-261, Tyr-346, and Tyr-411.

Belongs to the tryptophan dimethylallyltransferase family.

It carries out the reaction (S)-3-(indol-3-ylmethyl)-6,7,8,8a-tetrahydropyrrolo[1,2-a]pyrazin-1-one + dimethylallyl diphosphate = (S)-3-{[2-(1,1-dimethylallyl)-indol-3-yl]methyl}-6,7,8,8a-tetrahydropyrrolo[1,2-a]pyrazin-1-one + diphosphate. It catalyses the reaction 1-hydroxy-3-(indol-3-ylmethyl)-6H,7H,8H-5lambda(5)-pyrrolo[1,2-a]pyrazine + dimethylallyl diphosphate = 1-hydroxy-3-{[2-(1,1-dimethylallyl)-indol-3-yl]methyl}-6H,7H,8H-5lambda(5)-pyrrolo[1,2-a]pyrazine + diphosphate. The protein operates within alkaloid biosynthesis. Prenyltransferase; part of the gene cluster that mediates the biosynthesis of malbrancheamide, a dichlorinated fungal indole alkaloid that belongs to a family of natural products containing a characteristic bicyclo[2.2.2]diazaoctane core. The first step of malbrancheamide biosynthesis involves coupling of L-proline and L-tryptophan by malG, a bimodular NRPS, to produce L-Pro-L-Trp aldehyde through reductive offloading. This compound undergoes spontaneous cyclization and dehydration to give a dienamine which is reverse prenylated at C-2 by malE. The other prenyltransferase present in the cluster, malB, displays modest activity, suggesting that may be a redundant gene in the pathway. Subsequently, a [4+2] Diels-Alder cyclo-addition catalyzed by the bifunctional enzyme malC forms the characteristic bicyclo[2.2.2]diazaoctane ring of premalbrancheamid. Finally, the flavin-dependent halogenase malA catalyzes the iterative dichlorination of the indole ring of premalbrancheamide to yield C-9 monochlorinated malbrancheamide B, C-8 monochlorinated isomalbrancheamide B, and dichlorinated malbrancheamide. MalA is also able to brominate premalbrancheamide at C-9 to yield malbrancheamide C, and, to a lesser extend, at C-8 to yield isomalbrancheamide C. Finally, malA can brominate C-9 monochlorinated malbrancheamide B at C-8 to yield malbrancheamide D, or C-8 monochlorinated isomalbrancheamide B at C-9 to produce isomalbrancheamide D. This Malbranchea aurantiaca protein is Prenyltransferase malE.